The sequence spans 294 residues: Acetylglutamate kinase (294 aa).

Substrate is bound by residues 63-64, Arg85, and Asn188; that span reads GG.

The protein belongs to the acetylglutamate kinase family. ArgB subfamily.

The protein resides in the cytoplasm. The catalysed reaction is N-acetyl-L-glutamate + ATP = N-acetyl-L-glutamyl 5-phosphate + ADP. The protein operates within amino-acid biosynthesis; L-arginine biosynthesis; N(2)-acetyl-L-ornithine from L-glutamate: step 2/4. Its function is as follows. Catalyzes the ATP-dependent phosphorylation of N-acetyl-L-glutamate. The sequence is that of Acetylglutamate kinase from Methanococcus maripaludis (strain C5 / ATCC BAA-1333).